A 1347-amino-acid chain; its full sequence is Protocadherin-11 X-linked (1347 aa).

The N-terminal stretch at 1–23 is a signal peptide; the sequence is MDLLSGTYIFAVLLACVVFHSGA. Residues 24–812 are Extracellular-facing; that stretch reads QEKNYTIREE…VSSPTNDYVK (789 aa). Cadherin domains are found at residues 26–139, 140–249, 250–355, 362–466, 467–570, 571–673, and 677–795; these read KNYT…APLF, PATV…HPVF, KETE…VPSI, NPVN…APVF, TQSF…SPVF, THNE…KPVF, and PSNY…APVT. N-linked (GlcNAc...) asparagine glycosylation is found at Asn-27, Asn-48, and Asn-54. N-linked (GlcNAc...) asparagine glycosylation is present at Asn-344. Asn-553 carries an N-linked (GlcNAc...) asparagine glycan. Residue Asn-773 is glycosylated (N-linked (GlcNAc...) asparagine). Residues 813-833 form a helical membrane-spanning segment; that stretch reads ILVAAVAGTITVVVVIFITAV. Over 834 to 1347 the chain is Cytoplasmic; that stretch reads VRCRQAPHLK…DSPIMEEHPL (514 aa). 3 disordered regions span residues 1057–1091, 1097–1116, and 1326–1347; these read LPEG…GYPQ, RATP…ESTF, and FTPR…EHPL.

The protein localises to the cell membrane. In terms of biological role, potential calcium-dependent cell-adhesion protein. The sequence is that of Protocadherin-11 X-linked (PCDH11X) from Gorilla gorilla gorilla (Western lowland gorilla).